Reading from the N-terminus, the 429-residue chain is Ribosomal RNA small subunit methyltransferase B (429 aa).

Residues 254-260, Asp-277, Asp-303, and Asp-322 contribute to the S-adenosyl-L-methionine site; that span reads CAAPGGK. Cys-375 functions as the Nucleophile in the catalytic mechanism.

This sequence belongs to the class I-like SAM-binding methyltransferase superfamily. RsmB/NOP family.

The protein resides in the cytoplasm. It catalyses the reaction cytidine(967) in 16S rRNA + S-adenosyl-L-methionine = 5-methylcytidine(967) in 16S rRNA + S-adenosyl-L-homocysteine + H(+). Its function is as follows. Specifically methylates the cytosine at position 967 (m5C967) of 16S rRNA. The protein is Ribosomal RNA small subunit methyltransferase B of Yersinia pestis bv. Antiqua (strain Angola).